Reading from the N-terminus, the 207-residue chain is Killer cell lectin-like receptor subfamily F member 2 (207 aa).

The Cytoplasmic portion of the chain corresponds to 1–30 (MENEDGYMTLSFKNRCKSKQKSKDFSLYPQ). Tyr-7 bears the Phosphotyrosine mark. Residues 31–51 (YYCLLLIFGCIVILIFIMTGI) form a helical; Signal-anchor for type II membrane protein membrane-spanning segment. Over 52 to 207 (DLKFWHKKMD…ILTHNGTSGV (156 aa)) the chain is Extracellular. Asn-67 carries N-linked (GlcNAc...) asparagine glycosylation. Intrachain disulfides connect Cys-78–Cys-89, Cys-106–Cys-193, and Cys-172–Cys-185. One can recognise a C-type lectin domain in the interval 85–194 (NEGKCYWFST…CSSTFKGICQ (110 aa)). N-linked (GlcNAc...) asparagine glycosylation occurs at Asn-202.

Homodimer; non-disulfide-linked. Interacts with CLEC2A. N-glycosylated.

The protein resides in the cell membrane. Functionally, C-type lectin-like receptor involved in natural killer cell mediated cytotoxicity and cytokine secretion in keratinocytes via its interaction with CLEC2A. Triggers degranulation in a SYK-dependent manner and stimulates SYK phosphotyrosinylation without recruiting SYK directly. This chain is Killer cell lectin-like receptor subfamily F member 2 (KLRF2), found in Homo sapiens (Human).